We begin with the raw amino-acid sequence, 232 residues long: Lipoarabinomannan carrier protein LprG (232 aa).

A signal peptide spans Met-1–Gly-21. Cys-22 is lipidated: N-palmitoyl cysteine. A lipid anchor (S-diacylglycerol cysteine) is attached at Cys-22.

Belongs to the LppX/LprAFG lipoprotein family. In terms of processing, modified by Lgt on Cys-22 with an S-linked diacylglyceral, signal peptide is removed by LspA, Cys-22 is further modifed with a fatty acid on its amino group by Lnt yielding a triacylated protein.

It localises to the cell inner membrane. Functionally, helps membrane protein MHAS_02168/C731_2106 (P55) transport triacylglycerides (TAG) across the inner cell membrane into the periplasm and probably ultimately to the outer membrane. Binds TAG in its hydrophobic cavity and transfers it between lipid bilayers. TAG probably regulates lipid metabolism and growth regulation and plays a structural role in the outer membrane. Also binds mannosides, lipoarabinomannan and lipomannan and various glycolipids in the same cavity. The lprG-MHAS_02167/C731_2107 operon complements the vancomycin sensitivity of an M.smegmatis knockout of the same operon. This chain is Lipoarabinomannan carrier protein LprG, found in Mycolicibacterium hassiacum (strain DSM 44199 / CIP 105218 / JCM 12690 / 3849) (Mycobacterium hassiacum).